Here is a 678-residue protein sequence, read N- to C-terminus: Secretin ExeD (678 aa).

The N-terminal stretch at 1–25 (MINKGKSWRLATVAAALMMAGSAWA) is a signal peptide. The N0 stretch occupies residues 26–122 (TEYSASFKNA…VVDETNPGIG (97 aa)). Residues 124-188 (EMVTRVVPVR…EVVRRVDKAG (65 aa)) are N1. Residues 189 to 264 (DQEVDIIKLR…MVRQLDRDLQ (76 aa)) are N2. The segment at 267-347 (GNTRVFYLKY…ELEQVVAKLD (81 aa)) is N3. Residues 352–602 (QVLVEAIIVE…VFIRPTILRD (251 aa)) are secretin. Residues 604–678 (HVYSGISSNK…GAQPFVQGNK (75 aa)) form a s domain region.

The protein belongs to the bacterial secretin family. GSP D subfamily. Forms a cylindrical channel with 15 subunits.

The protein resides in the cell outer membrane. Its function is as follows. Involved in a type II secretion system (T2SS, formerly general secretion pathway, GSP) for the export of proteins. This subunit forms the outer membrane channel. This Aeromonas salmonicida protein is Secretin ExeD (exeD).